The sequence spans 152 residues: 6,7-dimethyl-8-ribityllumazine synthase (152 aa).

5-amino-6-(D-ribitylamino)uracil is bound by residues phenylalanine 22, 54–56 (AFE), and 78–80 (AVI). Residue 83–84 (ET) participates in (2S)-2-hydroxy-3-oxobutyl phosphate binding. The Proton donor role is filled by histidine 86. Residue phenylalanine 111 participates in 5-amino-6-(D-ribitylamino)uracil binding. Arginine 125 is a binding site for (2S)-2-hydroxy-3-oxobutyl phosphate.

This sequence belongs to the DMRL synthase family.

It catalyses the reaction (2S)-2-hydroxy-3-oxobutyl phosphate + 5-amino-6-(D-ribitylamino)uracil = 6,7-dimethyl-8-(1-D-ribityl)lumazine + phosphate + 2 H2O + H(+). Its pathway is cofactor biosynthesis; riboflavin biosynthesis; riboflavin from 2-hydroxy-3-oxobutyl phosphate and 5-amino-6-(D-ribitylamino)uracil: step 1/2. Catalyzes the formation of 6,7-dimethyl-8-ribityllumazine by condensation of 5-amino-6-(D-ribitylamino)uracil with 3,4-dihydroxy-2-butanone 4-phosphate. This is the penultimate step in the biosynthesis of riboflavin. The polypeptide is 6,7-dimethyl-8-ribityllumazine synthase (Limosilactobacillus reuteri (strain DSM 20016) (Lactobacillus reuteri)).